The sequence spans 301 residues: Phosducin-like protein (301 aa).

At threonine 2 the chain carries N-acetylthreonine. Residues 15 to 53 are disordered; sequence YYYSSSEEEDSDHEDKDRGRGALAGSSMPADADLAGEGI. 5 positions are modified to phosphoserine: serine 20, serine 25, serine 226, serine 293, and serine 296. Positions 37–299 constitute a Phosducin domain; sequence LAGSSMPADA…TCHSEDSDLE (263 aa). Residues 158–301 form a thioredoxin fold region; sequence FKQVFEIPSG…HSEDSDLEID (144 aa).

Belongs to the phosducin family. As to quaternary structure, forms a complex with the beta and gamma subunits of the GTP-binding protein, transducin. Interacts with the CCT chaperonin complex.

Its subcellular location is the cell projection. It localises to the cilium. Its function is as follows. Functions as a co-chaperone for CCT in the assembly of heterotrimeric G protein complexes, facilitates the assembly of both Gbeta-Ggamma and RGS-Gbeta5 heterodimers. Also acts as a positive regulator of hedgehog signaling and regulates ciliary function. This chain is Phosducin-like protein (PDCL), found in Bos taurus (Bovine).